The primary structure comprises 291 residues: T-cell leukemia homeobox protein 3 (291 aa).

The interval 1–51 (MEAPASAQTPHPHEPISFGIDQILNSPDQDSAPAPRGPDGASYLGGPPGGR) is disordered. The homeobox DNA-binding region spans 166-225 (RKKPRTSFSRVQICELEKRFHRQKYLASAERAALAKSLKMTDAQVKTWFQNRRTKWRRQT).

It localises to the nucleus. This Mus musculus (Mouse) protein is T-cell leukemia homeobox protein 3 (Tlx3).